We begin with the raw amino-acid sequence, 551 residues long: Oleuropein beta-glucosidase (551 aa).

Residues 1–27 are compositionally biased toward polar residues; the sequence is MDIQSNVLTITSGSTPTDTSSNGQAAK. Positions 1–33 are disordered; the sequence is MDIQSNVLTITSGSTPTDTSSNGQAAKSTKERI. Residues Gln52, His156, 201 to 202, Tyr363, Glu433, Trp482, 489 to 490, and Phe498 each bind a beta-D-glucoside; these read NE and EW. Glu202 acts as the Proton donor in catalysis. Glu433 (nucleophile) is an active-site residue. Positions 502 to 551 are required for the homomultimerization; sequence YVDYANGRYTRLPKRSAVWWRNFLTKPTAVPLKNEPEKSEDRRKRLRGST. Residues 532–551 form a disordered region; that stretch reads PLKNEPEKSEDRRKRLRGST. The segment covering 535 to 544 has biased composition (basic and acidic residues); that stretch reads NEPEKSEDRR. Positions 542-550 match the Nuclear localization signal motif; it reads DRRKRLRGS.

The protein belongs to the glycosyl hydrolase 1 family. Homomultimer. Native form of the enzyme requires at least an octamer conformation. Expressed in expanding leaves and in young drupes, mostly in the developing seed coat tissues, the perisperm and the mesocarp. Also detected in shoot and root meristems, flower buds, developing ovaries and tapetal cells of the anther. Not detected in embryos or endosperm, or in leaf trichomes.

Its subcellular location is the nucleus. It catalyses the reaction oleuropein + H2O = oleuropein aglycone + D-glucose. In terms of biological role, major beta-glucosidase activating oleuropein into a potent protein cross-linking agent. No activity with rutin, luteolin or p-nitrophenyl-beta-glucopyranoside as substrates. The protein is Oleuropein beta-glucosidase of Olea europaea (Common olive).